A 776-amino-acid polypeptide reads, in one-letter code: Transferrin receptor protein 1 (776 aa).

At 1-70 (MDHARAALSN…QPQRNGKRLC (70 aa)) the chain is on the cytoplasmic side. The Endocytosis signal motif lies at 19–22 (YTRF). Position 23 is a phosphoserine (Ser-23). A lipid anchor (S-palmitoyl cysteine) is attached at Cys-70. A helical; Signal-anchor for type II membrane protein membrane pass occupies residues 71–91 (FLVIAAVLLLLIGFLIGYLSY). Over 92–776 (RGRIELAARC…GDIWETDNEF (685 aa)) the chain is Extracellular. A PA domain is found at 230–322 (SESGSVSGKP…GTGDPYTPGF (93 aa)). N-linked (GlcNAc...) asparagine glycosylation is found at Asn-261, Asn-326, and Asn-391. A ligand-binding region spans residues 586–776 (KGDTLENLRK…GDIWETDNEF (191 aa)). Positions 662–664 (RGD) match the Cell attachment site motif. N-linked (GlcNAc...) asparagine glycosylation is present at Asn-738.

Belongs to the peptidase M28 family. M28B subfamily. As to quaternary structure, homodimer; disulfide-linked. Binds one transferrin molecule per subunit. In terms of processing, stearoylated. Stearoylation does not affect iron uptake. Post-translationally, N- and O-glycosylated, phosphorylated and palmitoylated.

Its subcellular location is the cell membrane. The protein localises to the melanosome. In terms of biological role, cellular uptake of iron occurs via receptor-mediated endocytosis of ligand-occupied transferrin receptor into specialized endosomes. Endosomal acidification leads to iron release. The apotransferrin-receptor complex is then recycled to the cell surface with a return to neutral pH and the concomitant loss of affinity of apotransferrin for its receptor. Transferrin receptor is necessary for development of erythrocytes and the nervous system. Acts as a lipid sensor that regulates mitochondrial fusion by regulating activation of the JNK pathway. When dietary levels of stearate (C18:0) are low, promotes activation of the JNK pathway, resulting in HUWE1-mediated ubiquitination and subsequent degradation of the mitofusin MFN2 and inhibition of mitochondrial fusion. When dietary levels of stearate (C18:0) are high, TFRC stearoylation inhibits activation of the JNK pathway and thus degradation of the mitofusin MFN2. Mediates uptake of NICOL1 into fibroblasts where it may regulate extracellular matrix production. This Gallus gallus (Chicken) protein is Transferrin receptor protein 1 (TFRC).